A 218-amino-acid polypeptide reads, in one-letter code: Glutathione S-transferase Mu 1 (218 aa).

Residues 2 to 88 form the GST N-terminal domain; that stretch reads PMILGYWDIR…YIARKHNLCG (87 aa). Residues 7 to 8, 43 to 46, Lys-50, 59 to 60, and 72 to 73 each bind glutathione; these read YW, RSQW, NL, and QS. The region spanning 90-208 is the GST C-terminal domain; it reads TEEEMIRVDI…KSSRFLPGPL (119 aa). Tyr-116 is a binding site for substrate.

This sequence belongs to the GST superfamily. Mu family. Homodimer.

It localises to the cytoplasm. It catalyses the reaction RX + glutathione = an S-substituted glutathione + a halide anion + H(+). It carries out the reaction prostaglandin A2 + glutathione = prostaglandin A2-S-(R)-glutathione. The catalysed reaction is prostaglandin J2 + glutathione = prostaglandin J2-S-(R)-glutathione. The enzyme catalyses prostaglandin J2 + glutathione = prostaglandin J2-S-(S)-glutathione. It catalyses the reaction prostaglandin A2 + glutathione = prostaglandin A2-S-(S)-glutathione. It carries out the reaction 11(S)-hydroxy-14(S),15(S)-epoxy-(5Z,8Z,12E)-eicosatrienoate + glutathione = (11S,15S)-dihydroxy-14(R)-S-glutathionyl-(5Z,8Z,12E)-eicosatrienoate. Its function is as follows. Conjugation of reduced glutathione to a wide number of exogenous and endogenous hydrophobic electrophiles. Protects against the thiol-mediated metal-catalyzed oxidative inactivation of enzymes. Involved in the formation of glutathione conjugates of both prostaglandin A2 (PGA2) and prostaglandin J2 (PGJ2). Participates in the formation of novel hepoxilin regioisomers. In Bos taurus (Bovine), this protein is Glutathione S-transferase Mu 1 (GSTM1).